The sequence spans 216 residues: MGWIRGRRSRHSWEMSEFHNYNLDLKKSDFSTRWQKQRCPVVKSKCRENASPFFFCCFIAVAMGIRFIIMVTIWSAVFLNSLFNQEVQIPLTESYCGPCPKNWICYKNNCYQFFNESKNWYESQASCMSQNASLLKVYSKEDQDLLKLVKSYHWMGLVHIPTNGSWQWEDGSILSPNLLTIIEMQKGDCALYASSFKGYIENCSTPNTYICMQRTV.

The Cytoplasmic segment spans residues methionine 1 to serine 51. A helical; Signal-anchor for type II membrane protein transmembrane segment spans residues proline 52–threonine 72. Residues isoleucine 73–valine 216 lie on the Extracellular side of the membrane. Cystine bridges form between cysteine 96-cysteine 105 and cysteine 99-cysteine 110. Residues proline 98–glutamine 213 enclose the C-type lectin domain. N-linked (GlcNAc...) asparagine glycans are attached at residues asparagine 115, asparagine 131, asparagine 163, and asparagine 202. 2 cysteine pairs are disulfide-bonded: cysteine 127/cysteine 211 and cysteine 189/cysteine 203.

As to quaternary structure, homodimer; disulfide-linked. Heterohexamer composed of two subunits of KLRK1 and four subunits of HCST/DAP10. Interacts (via transmembrane domain) with HCST/DAP10 (via transmembrane domain); the interaction is required for KLRK1 NK cell surface and induces NK cell-mediated cytotoxicity. Can form disulfide-bonded heterodimer with CD94. Interacts with CEACAM1; recruits PTPN6 that dephosphorylates VAV1. Natural killer cells.

Its subcellular location is the cell membrane. Its function is as follows. Functions as an activating and costimulatory receptor involved in immunosurveillance upon binding to various cellular stress-inducible ligands displayed at the surface of autologous tumor cells and virus-infected cells. Provides both stimulatory and costimulatory innate immune responses on activated killer (NK) cells, leading to cytotoxic activity. Acts as a costimulatory receptor for T-cell receptor (TCR) in CD8(+) T-cell-mediated adaptive immune responses by amplifying T-cell activation. Stimulates perforin-mediated elimination of ligand-expressing tumor cells. Signaling involves calcium influx, culminating in the expression of TNF-alpha. Participates in NK cell-mediated bone marrow graft rejection. May play a regulatory role in differentiation and survival of NK cells. Binds to ligands belonging to various subfamilies of MHC class I-related glycoproteins. The polypeptide is NKG2-D type II integral membrane protein (KLRK1) (Pan troglodytes (Chimpanzee)).